The sequence spans 432 residues: Trigger factor (432 aa).

Positions 165-250 constitute a PPIase FKBP-type domain; it reads GDFAKIDFEG…LKEIQVKAPQ (86 aa).

Belongs to the FKBP-type PPIase family. Tig subfamily.

It localises to the cytoplasm. It carries out the reaction [protein]-peptidylproline (omega=180) = [protein]-peptidylproline (omega=0). Functionally, involved in protein export. Acts as a chaperone by maintaining the newly synthesized protein in an open conformation. Functions as a peptidyl-prolyl cis-trans isomerase. This Wolinella succinogenes (strain ATCC 29543 / DSM 1740 / CCUG 13145 / JCM 31913 / LMG 7466 / NCTC 11488 / FDC 602W) (Vibrio succinogenes) protein is Trigger factor.